A 390-amino-acid polypeptide reads, in one-letter code: Queuine tRNA-ribosyltransferase (390 aa).

Asp-92 functions as the Proton acceptor in the catalytic mechanism. Residues 92–96, Asp-146, Gln-195, and Gly-222 contribute to the substrate site; that span reads DSGGF. The tract at residues 253 to 259 is RNA binding; sequence GVGTPED. The active-site Nucleophile is the Asp-272. The RNA binding; important for wobble base 34 recognition stretch occupies residues 277–281; it reads TRNAR. Zn(2+) is bound by residues Cys-310, Cys-312, Cys-315, and His-354.

Belongs to the queuine tRNA-ribosyltransferase family. As to quaternary structure, homodimer. Within each dimer, one monomer is responsible for RNA recognition and catalysis, while the other monomer binds to the replacement base PreQ1. The cofactor is Zn(2+).

It carries out the reaction 7-aminomethyl-7-carbaguanine + guanosine(34) in tRNA = 7-aminomethyl-7-carbaguanosine(34) in tRNA + guanine. It participates in tRNA modification; tRNA-queuosine biosynthesis. Its function is as follows. Catalyzes the base-exchange of a guanine (G) residue with the queuine precursor 7-aminomethyl-7-deazaguanine (PreQ1) at position 34 (anticodon wobble position) in tRNAs with GU(N) anticodons (tRNA-Asp, -Asn, -His and -Tyr). Catalysis occurs through a double-displacement mechanism. The nucleophile active site attacks the C1' of nucleotide 34 to detach the guanine base from the RNA, forming a covalent enzyme-RNA intermediate. The proton acceptor active site deprotonates the incoming PreQ1, allowing a nucleophilic attack on the C1' of the ribose to form the product. After dissociation, two additional enzymatic reactions on the tRNA convert PreQ1 to queuine (Q), resulting in the hypermodified nucleoside queuosine (7-(((4,5-cis-dihydroxy-2-cyclopenten-1-yl)amino)methyl)-7-deazaguanosine). The chain is Queuine tRNA-ribosyltransferase from Paracidovorax citrulli (strain AAC00-1) (Acidovorax citrulli).